Reading from the N-terminus, the 105-residue chain is MKEAVKMSCLCIFVFLFLFSLTDAIKCIKCGESGLFGTEDCVTGTFEAEECGPNDQYCTKIILNDGTRTTAQRGCSVGHVPESNQKDGKVSTHMSSCNTDGCNAN.

A signal peptide spans 1 to 24 (MKEAVKMSCLCIFVFLFLFSLTDA). Residues 79-105 (HVPESNQKDGKVSTHMSSCNTDGCNAN) are disordered. Positions 92–105 (THMSSCNTDGCNAN) are enriched in polar residues.

This sequence belongs to the scoloptoxin-05 family. In terms of processing, contains 4 disulfide bonds. In terms of tissue distribution, expressed by the venom gland.

It is found in the secreted. This Scolopendra dehaani (Thai centipede) protein is U-scoloptoxin(05)-Ssd1a.